The sequence spans 999 residues: Ulvan lyase, long isoform (999 aa).

An N-terminal signal peptide occupies residues Met-1 to Ala-21. Ser-126–His-127 is a substrate binding site. His-127 functions as the Proton donor/acceptor in the catalytic mechanism. Residues Asp-189, Asp-199, and Lys-201 each contribute to the Ca(2+) site. The substrate site is built by Tyr-280 and Arg-297. Ca(2+) is bound by residues Asp-300, Asp-303, and Tyr-305. Tyr-361 serves as a coordination point for substrate.

The protein belongs to the polysaccharide lyase 24 family.

Its function is as follows. Ulvan lyase involved in ulvan degradation. Ulvan is the main polysaccharide component of the Ulvales (green seaweed) cell wall. It is composed of disaccharide building blocks comprising 3-sulfated rhamnose (Rha3S) linked to D-glucuronic acid (GlcA), L-iduronic acid (IduA), or D-xylose (Xyl). Ulvan lyase catalyzes preferentially the endolytic cleavage of the glycosidic bond between Rha3S and the uronic acid GlcA, but not IduA, producing oligosaccharides that have unsaturated 4-deoxy-L-threo-hex-4-enopyranosiduronic acid (deltaUA) at the non-reducing end. The most abundant end products in the degradation of the ulvan polysaccharide were deltaUA-Rha3S disaccharides and deltaUA-Rha3S-IduA-Rha3S and deltaUA-Rha3S-Xyl-Rha3S tetrasaccharides. In Alteromonas sp, this protein is Ulvan lyase, long isoform.